The sequence spans 541 residues: T-complex protein 1 subunit epsilon (541 aa).

Ala-2 is modified (N-acetylalanine). Lys-20 is covalently cross-linked (Glycyl lysine isopeptide (Lys-Gly) (interchain with G-Cter in SUMO2)). Ser-26 is modified (phosphoserine). Gly-53 serves as a coordination point for ADP. Gly-53 is a binding site for ATP. Residue Asp-104 coordinates Mg(2+). ADP-binding residues include Gly-105, Thr-106, Thr-107, and Ser-175. 2 residues coordinate ATP: Thr-106 and Thr-107. Residues Lys-210, Lys-214, Lys-265, Lys-275, and Lys-279 each participate in a glycyl lysine isopeptide (Lys-Gly) (interchain with G-Cter in SUMO2) cross-link. Phosphoserine is present on Ser-346. Lys-392 is covalently cross-linked (Glycyl lysine isopeptide (Lys-Gly) (interchain with G-Cter in SUMO2)). Gly-422, Asp-492, Glu-508, and Lys-513 together coordinate ADP. Gly-422 provides a ligand contact to ATP. A Phosphoserine modification is found at Ser-539.

Belongs to the TCP-1 chaperonin family. Component of the chaperonin-containing T-complex (TRiC), a hexadecamer composed of two identical back-to-back stacked rings enclosing a protein folding chamber. Each ring is made up of eight different subunits: TCP1/CCT1, CCT2, CCT3, CCT4, CCT5, CCT6A/CCT6, CCT7, CCT8. Interacts with PACRG. Interacts with DNAAF4. Interacts with DLEC1. Interacts with SPMAP2. Post-translationally, ubiquitinated by the DCX(DCAF12) complex specifically recognizes the diglutamate (Glu-Glu) at the C-terminus, leading to its degradation.

It is found in the cytoplasm. It localises to the cytoskeleton. Its subcellular location is the microtubule organizing center. The protein localises to the centrosome. It carries out the reaction ATP + H2O = ADP + phosphate + H(+). Functionally, component of the chaperonin-containing T-complex (TRiC), a molecular chaperone complex that assists the folding of actin, tubulin and other proteins upon ATP hydrolysis. The TRiC complex mediates the folding of WRAP53/TCAB1, thereby regulating telomere maintenance. As part of the TRiC complex may play a role in the assembly of BBSome, a complex involved in ciliogenesis regulating transports vesicles to the cilia. The sequence is that of T-complex protein 1 subunit epsilon (CCT5) from Pongo abelii (Sumatran orangutan).